Consider the following 580-residue polypeptide: MHLSAVFNALLVSVLAAVLWKHVRLREHAATLEEELALGQQSLDPVLGLKIDYPKALQILMEGGTHMVCTGRTHTDRICRFKWLCYSNEAEEFIFFHGNSSVMLPNLGSRRFQPALLDLSTVEDHNAQYFNFVELPAAALRFMPKPVFVPDVALIANRFNPDNLMHVFHDDLLPLFYTLRQFPGLAQEARLFFMEGWGEGAHFDLYKLLSPKQPLLRAQLKTLGRLLCFSHAFVGLSKVTTWYQYGFVQPQGPKANILVSGNEIRQFTRFMTERLNVSHAGAPLGEEYILVFSRTQNRLILNEAELLLELAQEFQMKTVTVSLEDHTFADVVRLVSNASMLVSMHGAQLVTALFLPRGATVVELFPYAVNPDHYTPYKTLATLPGMDLQYVAWRNMIRENTVTHPERPWDQGGITHLDRAEQARILQSREVPRHLCCRNPEWLFRIYQDTRVDIPSLMQSIRRVVKGRPGPRRQRWAISLYPGKVREARCQASVQGATEARLSVSWQIPWNLKYLKVREVKYEVWLQEQGENTYVPYMLTLQNHTFTENIKPFTTYLVWVRCIFNRSLLGPFADVLVCST.

Topologically, residues Met-1–Ser-4 are cytoplasmic. The helical; Signal-anchor for type II membrane protein transmembrane segment at Ala-5 to Leu-25 threads the bilayer. At Arg-26 to Thr-580 the chain is on the lumenal side. N-linked (GlcNAc...) asparagine glycans are attached at residues Asn-99 and Asn-276. One can recognise a Fibronectin type-III domain in the interval Ala-488–Thr-580.

The protein belongs to the glycosyltransferase 61 family. In terms of tissue distribution, mainly expressed in the central nervous system.

The protein resides in the endoplasmic reticulum membrane. The enzyme catalyses 3-O-(alpha-D-mannosyl)-L-threonyl-[protein] + UDP-N-acetyl-alpha-D-glucosamine = 3-O-(N-acetyl-beta-D-glucosaminyl-(1-&gt;4)-alpha-D-mannosyl)-L-threonyl-[protein] + UDP + H(+). It participates in protein modification; protein glycosylation. O-linked mannose beta-1,4-N-acetylglucosaminyltransferase that transfers UDP-N-acetyl-D-glucosamine to the 4-position of the mannose to generate N-acetyl-D-glucosamine-beta-1,4-O-D-mannosylprotein. Involved in the biosynthesis of the phosphorylated O-mannosyl trisaccharide (N-acetylgalactosamine-beta-3-N-acetylglucosamine-beta-4-(phosphate-6-)mannose), a carbohydrate structure present in alpha-dystroglycan (DAG1), which is required for binding laminin G-like domain-containing extracellular proteins with high affinity. The polypeptide is Protein O-linked-mannose beta-1,4-N-acetylglucosaminyltransferase 2 (Pomgnt2) (Mus musculus (Mouse)).